The sequence spans 167 residues: NADH-ubiquinone oxidoreductase chain 6 (167 aa).

The next 5 helical transmembrane spans lie at 1-21 (MVLM…VASN), 23-43 (SPYF…GMLM), 47-67 (MTFL…VVFA), 86-106 (VFSY…AFVG), and 133-153 (AGGY…LVVL).

The protein belongs to the complex I subunit 6 family.

The protein resides in the mitochondrion membrane. It carries out the reaction a ubiquinone + NADH + 5 H(+)(in) = a ubiquinol + NAD(+) + 4 H(+)(out). Core subunit of the mitochondrial membrane respiratory chain NADH dehydrogenase (Complex I) that is believed to belong to the minimal assembly required for catalysis. Complex I functions in the transfer of electrons from NADH to the respiratory chain. The immediate electron acceptor for the enzyme is believed to be ubiquinone. The polypeptide is NADH-ubiquinone oxidoreductase chain 6 (MT-ND6) (Polypterus ornatipinnis (Ornate bichir)).